Consider the following 306-residue polypeptide: MAAVDDLQFEEFGDGATLLAANPDATTINIEDPSVSFKHQPRPPGSLGREEDEELLGTNDSDETELLAGQKKSSPFWTFEYYQTFFDVDTYQVFDRIKGSLLPVPGKNFVRLYIRSNPDLYGPFWICATLVFAIAISGNLSNFLIHLGEKTYHYVPEFQKVSIAATVIYAYAWLVPLALWGFLLWRNSKVMNIVSYSFLEIVCVYGYSLFIYIPTAVLWIIPQRVIRWVLVTIALGISGSVLAMTFWPAVREDNRRVALATIVTIMLLHVLLSVGCLAYFFDAPEMDHLPAAITTPNQTVAAAKSS.

Residues 1–119 are Cytoplasmic-facing; the sequence is MAAVDDLQFE…VRLYIRSNPD (119 aa). Residues 33–59 are disordered; that stretch reads PSVSFKHQPRPPGSLGREEDEELLGTN. Residues 50-59 show a composition bias toward acidic residues; it reads EEDEELLGTN. The helical transmembrane segment at 120–140 threads the bilayer; that stretch reads LYGPFWICATLVFAIAISGNL. Topologically, residues 141 to 162 are lumenal; it reads SNFLIHLGEKTYHYVPEFQKVS. A helical membrane pass occupies residues 163–183; it reads IAATVIYAYAWLVPLALWGFL. The Cytoplasmic portion of the chain corresponds to 184-200; sequence LWRNSKVMNIVSYSFLE. Residues 201 to 221 form a helical membrane-spanning segment; it reads IVCVYGYSLFIYIPTAVLWII. Over 222–227 the chain is Lumenal; the sequence is PQRVIR. Residues 228–248 traverse the membrane as a helical segment; sequence WVLVTIALGISGSVLAMTFWP. At 249–256 the chain is on the cytoplasmic side; it reads AVREDNRR. A helical transmembrane segment spans residues 257–277; it reads VALATIVTIMLLHVLLSVGCL. At 278–306 the chain is on the lumenal side; the sequence is AYFFDAPEMDHLPAAITTPNQTVAAAKSS. Asn297 carries N-linked (GlcNAc...) asparagine glycosylation.

It belongs to the YIP1 family. In terms of assembly, interacts with YIPF6; this interaction may stabilize YIPF1. May also form a ternary complex with YIPF2 and YIPF6.

The protein localises to the golgi apparatus. The protein resides in the cis-Golgi network membrane. It is found in the trans-Golgi network membrane. Its subcellular location is the late endosome membrane. The polypeptide is Protein YIPF1 (Yipf1) (Rattus norvegicus (Rat)).